The following is a 516-amino-acid chain: Propionyl-CoA carboxylase, carboxyltransferase subunit (516 aa).

A disordered region spans residues 1-32 (MTMEDRIDELREKREEALKGGGEDRIASQHDK). The CoA carboxyltransferase N-terminal domain occupies 3-259 (MEDRIDELRE…NNVEDPPRVE (257 aa)). Residues 263–509 (DPERVADELE…KSKRKSQPDK (247 aa)) enclose the CoA carboxyltransferase C-terminal domain.

Belongs to the AccD/PCCB family. As to quaternary structure, the propionyl coenzyme A carboxylase (PCC) complex is composed of three subunits: PccA (biotin carboxylase and biotin-carboxyl carrier), PccB (carboxyltransferase) and PccX.

It catalyses the reaction propanoyl-CoA + hydrogencarbonate + ATP = (S)-methylmalonyl-CoA + ADP + phosphate + H(+). It participates in metabolic intermediate metabolism; propanoyl-CoA degradation; succinyl-CoA from propanoyl-CoA: step 1/3. Functionally, part of the propionyl coenzyme A carboxylase (PCC) complex involved in propionate utilization and in the production of the poly(3-hydroxybutyrate-co-3-hydroxyvalerate)(PHBV), which is a water-insoluble biopolymer used as intracellular energy reserve material when cells grow under conditions of nutrient limitation. The complex catalyzes the carboxylation of propionyl-CoA to methylmalonyl-CoA. PCC is also able to catalyze the carboxylation of acetyl-CoA. This is Propionyl-CoA carboxylase, carboxyltransferase subunit from Haloferax mediterranei (strain ATCC 33500 / DSM 1411 / JCM 8866 / NBRC 14739 / NCIMB 2177 / R-4) (Halobacterium mediterranei).